The chain runs to 179 residues: Large ribosomal subunit protein uL5 (179 aa).

The protein belongs to the universal ribosomal protein uL5 family. As to quaternary structure, part of the 50S ribosomal subunit; part of the 5S rRNA/L5/L18/L25 subcomplex. Contacts the 5S rRNA and the P site tRNA. Forms a bridge to the 30S subunit in the 70S ribosome.

Its function is as follows. This is one of the proteins that bind and probably mediate the attachment of the 5S RNA into the large ribosomal subunit, where it forms part of the central protuberance. In the 70S ribosome it contacts protein S13 of the 30S subunit (bridge B1b), connecting the 2 subunits; this bridge is implicated in subunit movement. Contacts the P site tRNA; the 5S rRNA and some of its associated proteins might help stabilize positioning of ribosome-bound tRNAs. The polypeptide is Large ribosomal subunit protein uL5 (Chromobacterium violaceum (strain ATCC 12472 / DSM 30191 / JCM 1249 / CCUG 213 / NBRC 12614 / NCIMB 9131 / NCTC 9757 / MK)).